A 1883-amino-acid chain; its full sequence is DDB1- and CUL4-associated factor homolog 1 (1883 aa).

Disordered stretches follow at residues 1 to 47 and 309 to 340; these read MDGQ…QSVE and KPGD…HEGA. The segment covering 37–47 has biased composition (acidic residues); that stretch reads NPEEGEEQSVE. A compositionally biased stretch (basic and acidic residues) spans 309-322; it reads KPGDDNSVRDDPSR. Residues 323–334 show a composition bias toward basic residues; that stretch reads HRLNRSKSRGRG. Ser349 bears the Phosphoserine mark. Residues 882–924 are disordered; the sequence is NKPPLAQNHQPVPGQATTRPSTDVAVGTQSTGNAPQTPVAPAS. A compositionally biased stretch (polar residues) spans 888-917; it reads QNHQPVPGQATTRPSTDVAVGTQSTGNAPQ. The LisH domain occupies 1087-1119; it reads DSKELLLLIHEHLQASGLGDTASALLKEAQLTP. Disordered regions lie at residues 1157 to 1202, 1214 to 1260, and 1310 to 1377; these read TSKP…QWPS, PKIN…ALPQ, and SELR…NPER. A compositionally biased stretch (low complexity) spans 1238 to 1251; that stretch reads LTFSPSFSSQSRKQ. Over residues 1310–1329 the composition is skewed to basic and acidic residues; it reads SELRDSSVPGKRIDLGERRN. Over residues 1330–1362 the composition is skewed to polar residues; that stretch reads STFADGSGLQTPASALDANQSGSSRLGQMTPAS. WD repeat units follow at residues 1464–1503, 1506–1546, 1548–1586, 1587–1626, and 1633–1671; these read DETA…MLES, GHQA…GGPR, SFDG…TCSP, CQKL…RRIP, and DQFT…VPSL. Short sequence motifs (DWD box) lie at residues 1619-1626 and 1655-1662; these read VLWDRRIP and EIWDMRTF. The disordered stretch occupies residues 1763-1883; that stretch reads YEIGRRRPTD…DDYRDNIRSS (121 aa). Composition is skewed to acidic residues over residues 1773 to 1796 and 1808 to 1864; these read DDSD…EDDL and DSGD…DGEM.

Belongs to the VPRBP/DCAF1 family. As to quaternary structure, component of the CUL4-RBX1-DDB1-DCAF1 E3 ubiquitin-protein ligase complex. Interacts with DDB1A through its DWD motifs. Ubiquitous but predominantly expressed in the inflorescence and roots.

The protein localises to the nucleus. The protein operates within protein modification; protein ubiquitination. Its function is as follows. Component of the CUL4-RBX1-DDB1-DCAF1 E3 ubiquitin-protein ligase complex, DCAF1 may function as the substrate recognition module within this complex. Appears to be required for plant embryogenesis and to affect several other developmental processes including leaf, shoot, and flower development. This chain is DDB1- and CUL4-associated factor homolog 1 (DCAF1), found in Arabidopsis thaliana (Mouse-ear cress).